Here is an 827-residue protein sequence, read N- to C-terminus: Polyhomeotic-like protein 2 (827 aa).

Disordered regions lie at residues 1–78, 282–316, and 482–545; these read MEKE…QYLQ, GLGA…SDLT, and QEPT…PPQA. The span at 9–38 shows a compositional bias: low complexity; that stretch reads SVASSASVTIPSTTSVSTSTSAGTLSNSSS. The segment covering 485-498 has biased composition (basic and acidic residues); that stretch reads TRTELRQSDKESQV. Over residues 517–538 the composition is skewed to polar residues; sequence AMTSGSGNNAPTVTGSAPQNGE. The short motif at 540 to 570 is the HD1 element; that stretch reads KPPPQAVVKPQILTHVIEGFVIQEGAEPFPV. The segment at 609-643 adopts an FCS-type zinc-finger fold; sequence NNQPEPVRTCEFCGNVDFAFNFKRSKRFCSTVCAK. 4 residues coordinate Zn(2+): cysteine 618, cysteine 621, cysteine 637, and cysteine 641. Positions 653 to 730 are disordered; it reads MGLFPGKSSP…EPISPLSNSS (78 aa). Residues 661 to 675 are compositionally biased toward basic and acidic residues; that stretch reads SPEDTKKPKASDESP. Composition is skewed to polar residues over residues 687 to 696 and 708 to 717; these read PSIQTTTGAS and GESSQCSDMS. The SAM domain occupies 763-827; it reads WNVEDVYEFI…FARISMLKDS (65 aa).

Component of a PRC1-like complex. Isoform 1 expression is stronger at the posterior border than in the anterior region within individual somites; On the contrary, isoform 2 expression is higher at the posterior border.

The protein localises to the nucleus. Component of a Polycomb group (PcG) multiprotein PRC1-like complex, a complex class required to maintain the transcriptionally repressive state of many genes, including Hox genes, throughout development. PcG PRC1 complex acts via chromatin remodeling and modification of histones; it mediates monoubiquitination of histone H2A 'Lys-119', rendering chromatin heritably changed in its expressibility. The sequence is that of Polyhomeotic-like protein 2 (phc2) from Danio rerio (Zebrafish).